Reading from the N-terminus, the 342-residue chain is ATP synthase subunit a (342 aa).

The next 8 membrane-spanning stretches (helical) occupy residues 11 to 31, 109 to 129, 170 to 190, 199 to 219, 238 to 258, 262 to 282, 287 to 307, and 308 to 328; these read GLIK…AFAS, HVVT…IIGS, YLPY…LGLV, NINV…IAAL, ALWI…PVAL, LFAN…ISFI, IVAV…EIFV, and AFLQ…LASA.

The protein belongs to the ATPase A chain family. F-type ATPases have 2 components, CF(1) - the catalytic core - and CF(0) - the membrane proton channel. CF(1) has five subunits: alpha(3), beta(3), gamma(1), delta(1), epsilon(1). CF(0) has four main subunits: a, b, b' and c.

It localises to the cell inner membrane. Its function is as follows. Key component of the proton channel; it plays a direct role in the translocation of protons across the membrane. The polypeptide is ATP synthase subunit a (Chlorobium phaeobacteroides (strain DSM 266 / SMG 266 / 2430)).